A 334-amino-acid chain; its full sequence is Malate dehydrogenase (334 aa).

17 to 23 is a binding site for NAD(+); sequence GAAGQIG. The substrate site is built by arginine 98 and arginine 104. NAD(+)-binding positions include asparagine 111, glutamine 118, and 135 to 137; that span reads VGN. The substrate site is built by asparagine 137 and arginine 168. Histidine 193 serves as the catalytic Proton acceptor.

The protein belongs to the LDH/MDH superfamily. MDH type 2 family.

It carries out the reaction (S)-malate + NAD(+) = oxaloacetate + NADH + H(+). Its function is as follows. Catalyzes the reversible oxidation of malate to oxaloacetate. The chain is Malate dehydrogenase from Deinococcus geothermalis (strain DSM 11300 / CIP 105573 / AG-3a).